The chain runs to 808 residues: MTSPKGKPSPKRSAPAPTTAALTPRTEERTEGATSSASASASSHISSSFDSPRDDTVVFTGYTAESKHNAHGYERLHDIILQDGDTGADSEDGRANEDNVILFPHAEELANAAAGINGDDDNGRVVRLGTIQHLEESDSSEDEPTLNRVGDIPLEWYKDEDHIGYDIEGKKLMKKERSALERLLEATDDPNAMRTIYDALHDEKKTLSNADLQLIFNLQRNRTTNPNYDMYSEVQEDTVVFDPLNHPLARSGGPSKRAFVPALHDMKVIAKMVRRLRKEEAERKLRPGKEEKEEEDQLLWDDGHVEMDTHTHFKYFNRVPKPKLPPPGTFESYRPPPEYLPSERAKQRQARLRAIDRKEHFLPQSFDALRHVPFYHHTIQDRYQRCLDLAFFPRAQRTRLVVDPDKLLPELPDPKDLRPYPEKLSFHYKGHTATVRSVSVSPNGQYLATGCDDHLVRVFEVQTGRLMKRYDMGAPVQQVEFCPSTSLNILAAAVEYSLVFIVPTFAAHTLVNDHTIRFLRAPGLSAGQREAAHALGAVDTLGGRAVTQTTLDADETAHEATADLHDIEEREKRAEFVDASAKERNAGIVVKIAMHAKVKKFCFHIKGDYLCALCPKDHVKYRQTIMLQLSKRKVFCPFRKFSEVVTDCRFHPREPIFFLATTNSVRCYNLMAHRLQRRFKASGGVTTCLSIHPEGDNFLVGDTTSHTSWFDMDFSDKPYKRMRSHRGVVNALAFHPKTNAYPLFATGASDGQVHVFHGMVYDDYNKNALVVPVKILKHQRPVYAVAWHPTLAWLFTSTEDGVVTAWTE.

Residues 1–56 form a disordered region; sequence MTSPKGKPSPKRSAPAPTTAALTPRTEERTEGATSSASASASSHISSSFDSPRDDT. 2 stretches are compositionally biased toward low complexity: residues 12-24 and 33-50; these read RSAPAPTTAALTP and ATSSASASASSHISSSFD. 5 WD repeats span residues 430–469, 640–680, 682–720, 724–766, and 777–808; these read GHTATVRSVSVSPNGQYLATGCDDHLVRVFEVQTGRLMKR, KFSE…RRFK, SGGVTTCLSIHPEGDNFLVGDTTSHTSWFDMDFSDKPYK, SHRG…DYNK, and KHQRPVYAVAWHPTLAWLFTSTEDGVVTAWTE.

It belongs to the WD repeat BOP1/ERB1 family.

The protein resides in the nucleus. It localises to the nucleolus. It is found in the nucleoplasm. Its function is as follows. Required for maturation of ribosomal RNAs and formation of the large ribosomal subunit. The sequence is that of Ribosome biogenesis protein BOP1 homolog from Leishmania infantum.